Consider the following 230-residue polypeptide: tRNA pseudouridine synthase B (230 aa).

Asp45 serves as the catalytic Nucleophile.

This sequence belongs to the pseudouridine synthase TruB family. Type 1 subfamily.

It catalyses the reaction uridine(55) in tRNA = pseudouridine(55) in tRNA. In terms of biological role, responsible for synthesis of pseudouridine from uracil-55 in the psi GC loop of transfer RNAs. This is tRNA pseudouridine synthase B from Endomicrobium trichonymphae.